The following is a 150-amino-acid chain: Probable cyclase FGR4 (150 aa).

Its pathway is secondary metabolite biosynthesis. Its function is as follows. Probable cyclase; part of the gene cluster that mediates the biosynthesis of the tetraketides fugralins such as linear fugralin A and cyclic fugralin B, volatile compounds that play a role in the asexual reproductive cycle but are not involved in pathogenicity. Fugralin B is similar to fugralin A except for a cyclization between the carboxylic acid C-8 and the alcohol on C-4 resulting in a six membered lactone ring, probably catalyzed by the cyclase FGR4. One of the key features of fugralins is the presence of a double methyl group, which is only rarely encountered in fungal secondary metabolites. As the fugralins cluster does not contain an independent methyltransferase, the PKS FGR1 is probably responsible for adding two methyl groups to the same carbon atom. The exact role of the individual cluster genes remains unknown and further work is needed to unravel the biosynthetic pathway. In Gibberella zeae (strain ATCC MYA-4620 / CBS 123657 / FGSC 9075 / NRRL 31084 / PH-1) (Wheat head blight fungus), this protein is Probable cyclase FGR4.